The chain runs to 504 residues: MSKEDNVMNSFEEQANELMKERFQKLKELQSNGKDPFDVYKVERTHTSKEVKENYEDLEGKTVTVAGRLMSKRVHGKAGFSDIHDRYGKIQLYIKINDVGEEKLKEYKTFDIGDIISVTGTVFKTKTGETSIHITDFQLVCKSLRPLPEKWHGLKDPDLRYRQRYVDLIINQDVRDTFMKRTAIIKTMREYLDNKGFLEVETPILSPIAGGAAAKPFITHHNALNIDMYLRIATELYLKRLIVGGFEKVYEIGRNFRNEGMDIRHNPEFTVIELYEAYADYNDMMEITENMIAYICEKVLGTTKVQYEGTEIDFTPPWRRLTMVDAVREYAGVDFNTIKDDIEARTIAKEKHIEFKKELKDCTKGDVLIGLFEEFCEDKLMQPTFICDYPVENSPLTKKKRGNEAFTERFEGFVFGREVCNAYSELNDSIVQKERFMQQLKERELGDDEAYMMDDDFITSLEVGMPPTGGLGIGIDRLIMFLTDTHSIRDVILFPTMKPQPNNQ.

2 residues coordinate Mg(2+): E411 and E418.

It belongs to the class-II aminoacyl-tRNA synthetase family. In terms of assembly, homodimer. Mg(2+) is required as a cofactor.

It is found in the cytoplasm. The catalysed reaction is tRNA(Lys) + L-lysine + ATP = L-lysyl-tRNA(Lys) + AMP + diphosphate. In Clostridium botulinum (strain ATCC 19397 / Type A), this protein is Lysine--tRNA ligase.